We begin with the raw amino-acid sequence, 488 residues long: 2,3-bisphosphoglycerate-independent phosphoglycerate mutase (488 aa).

S10 serves as the catalytic Phosphoserine intermediate. Residue S10 coordinates Mn(2+). Residues H69, 99 to 100, R135, R142, 215 to 218, and K290 each bind substrate; these read RD and RADR. Mn(2+) contacts are provided by D359, H363, D400, H401, and H430.

Belongs to the BPG-independent phosphoglycerate mutase family. As to quaternary structure, monomer. It depends on Mn(2+) as a cofactor.

The protein resides in the cytoplasm. The catalysed reaction is (2R)-2-phosphoglycerate = (2R)-3-phosphoglycerate. Its pathway is carbohydrate degradation; glycolysis; pyruvate from D-glyceraldehyde 3-phosphate: step 3/5. Functionally, catalyzes the interconversion of 2-phosphoglycerate and 3-phosphoglycerate. This is 2,3-bisphosphoglycerate-independent phosphoglycerate mutase from Prunus dulcis (Almond).